An 80-amino-acid chain; its full sequence is Acyl carrier protein (80 aa).

Residues 1 to 76 (MTLEEKIIEI…DVIDYLKVRN (76 aa)) form the Carrier domain. Ser-36 carries the O-(pantetheine 4'-phosphoryl)serine modification.

This sequence belongs to the acyl carrier protein (ACP) family. Post-translationally, 4'-phosphopantetheine is transferred from CoA to a specific serine of apo-ACP by AcpS. This modification is essential for activity because fatty acids are bound in thioester linkage to the sulfhydryl of the prosthetic group.

Its subcellular location is the cytoplasm. It participates in lipid metabolism; fatty acid biosynthesis. In terms of biological role, carrier of the growing fatty acid chain in fatty acid biosynthesis. The polypeptide is Acyl carrier protein (Syntrophus aciditrophicus (strain SB)).